The primary structure comprises 288 residues: Pyridoxal kinase PdxY (288 aa).

Residues Ser-12 and Thr-47–Gln-48 contribute to the substrate site. ATP-binding positions include Asp-114, Glu-151, Lys-184, and Arg-211–Leu-214. Asp-225 lines the substrate pocket.

The protein belongs to the pyridoxine kinase family. PdxY subfamily. In terms of assembly, homodimer. Mg(2+) serves as cofactor.

It catalyses the reaction pyridoxal + ATP = pyridoxal 5'-phosphate + ADP + H(+). The protein operates within cofactor metabolism; pyridoxal 5'-phosphate salvage; pyridoxal 5'-phosphate from pyridoxal: step 1/1. In terms of biological role, pyridoxal kinase involved in the salvage pathway of pyridoxal 5'-phosphate (PLP). Catalyzes the phosphorylation of pyridoxal to PLP. This is Pyridoxal kinase PdxY from Pseudomonas paraeruginosa (strain DSM 24068 / PA7) (Pseudomonas aeruginosa (strain PA7)).